A 440-amino-acid polypeptide reads, in one-letter code: Cell division protein FtsA (440 aa).

A disordered region spans residues 396-440 (VSSSEEQEQHHHQNEVQQRPKGKQKTQAEHNKQSKMKKLLSMFWE).

This sequence belongs to the FtsA/MreB family. In terms of assembly, homodimer. Interacts with FtsZ.

The protein resides in the cell membrane. Functionally, cell division protein that is required for the assembly of the Z ring. May serve as a membrane anchor for the Z ring. Binds and hydrolyzes ATP. Also involved in sporulation. In Bacillus subtilis (strain 168), this protein is Cell division protein FtsA.